We begin with the raw amino-acid sequence, 157 residues long: Small ribosomal subunit protein uS7 (157 aa).

It belongs to the universal ribosomal protein uS7 family. Part of the 30S ribosomal subunit. Contacts proteins S9 and S11.

Functionally, one of the primary rRNA binding proteins, it binds directly to 16S rRNA where it nucleates assembly of the head domain of the 30S subunit. Is located at the subunit interface close to the decoding center, probably blocks exit of the E-site tRNA. The protein is Small ribosomal subunit protein uS7 of Acidovorax ebreus (strain TPSY) (Diaphorobacter sp. (strain TPSY)).